We begin with the raw amino-acid sequence, 156 residues long: Small ribosomal subunit protein uS7 (156 aa).

It belongs to the universal ribosomal protein uS7 family. In terms of assembly, part of the 30S ribosomal subunit. Contacts proteins S9 and S11.

One of the primary rRNA binding proteins, it binds directly to 16S rRNA where it nucleates assembly of the head domain of the 30S subunit. Is located at the subunit interface close to the decoding center, probably blocks exit of the E-site tRNA. The polypeptide is Small ribosomal subunit protein uS7 (Sorangium cellulosum (strain So ce56) (Polyangium cellulosum (strain So ce56))).